We begin with the raw amino-acid sequence, 278 residues long: MQLILISGLAGSGKSIALNVLEDSGYSCIDNLPLTLVPDTVERLAPLGYEQLAISIDTRDGASRLLEVIHALETAGHNVRFLFLEARTDTLIRRFSETRRRHPLSRTALTIPEAIARERQLLQAIAGLGHRIDTSDLSPNQLRRYLRDVIAQAPGRMLVVIQSFGFKHGVPLDADFVFDVRCLPNPYYDPALRPFTGRDAPIINFLTAEPLVQAMADELSGLALRWIPVFRHDNRNYLTFAIGCTGGQHRSVYLAETLAARLRETGETVLLRHRELDR.

Residue 8–15 coordinates ATP; that stretch reads GLAGSGKS. A GTP-binding site is contributed by 57-60; that stretch reads DTRD.

Belongs to the RapZ-like family.

In terms of biological role, displays ATPase and GTPase activities. In Laribacter hongkongensis (strain HLHK9), this protein is Nucleotide-binding protein LHK_02029.